Reading from the N-terminus, the 929-residue chain is Type I restriction enzyme SauCOLORF180P endonuclease subunit (929 aa).

One can recognise a Helicase ATP-binding domain in the interval glutamine 254 to glycine 418. Position 268-274 (threonine 268–threonine 274) interacts with ATP.

This sequence belongs to the HsdR family. As to quaternary structure, the type I restriction/modification system is composed of three polypeptides R, M and S.

It carries out the reaction Endonucleolytic cleavage of DNA to give random double-stranded fragments with terminal 5'-phosphates, ATP is simultaneously hydrolyzed.. In terms of biological role, the restriction (R) subunit of a type I restriction enzyme that recognizes an undetermined sequence and cleaves a random distance away. Subunit R is required for both nuclease and ATPase activities, but not for modification. After locating a non-methylated recognition site, the enzyme complex serves as a molecular motor that translocates DNA in an ATP-dependent manner until a collision occurs that triggers cleavage. This is Type I restriction enzyme SauCOLORF180P endonuclease subunit from Staphylococcus aureus (strain COL).